Consider the following 522-residue polypeptide: Anthranilate synthase component 1 (522 aa).

Residues serine 40 and 292 to 294 (PYM) each bind L-tryptophan. Residue 329-330 (GT) participates in chorismate binding. Glutamate 362 is a binding site for Mg(2+). Chorismate is bound by residues tyrosine 450, arginine 470, 484–486 (GAG), and glycine 486. Glutamate 499 contributes to the Mg(2+) binding site.

This sequence belongs to the anthranilate synthase component I family. As to quaternary structure, heterotetramer consisting of two non-identical subunits: a beta subunit (TrpG) and a large alpha subunit (TrpE). It depends on Mg(2+) as a cofactor.

The enzyme catalyses chorismate + L-glutamine = anthranilate + pyruvate + L-glutamate + H(+). The protein operates within amino-acid biosynthesis; L-tryptophan biosynthesis; L-tryptophan from chorismate: step 1/5. Feedback inhibited by tryptophan. Its function is as follows. Part of a heterotetrameric complex that catalyzes the two-step biosynthesis of anthranilate, an intermediate in the biosynthesis of L-tryptophan. In the first step, the glutamine-binding beta subunit (TrpG) of anthranilate synthase (AS) provides the glutamine amidotransferase activity which generates ammonia as a substrate that, along with chorismate, is used in the second step, catalyzed by the large alpha subunit of AS (TrpE) to produce anthranilate. In the absence of TrpG, TrpE can synthesize anthranilate directly from chorismate and high concentrations of ammonia. The chain is Anthranilate synthase component 1 (trpE) from Buchnera aphidicola subsp. Baizongia pistaciae (strain Bp).